Here is a 95-residue protein sequence, read N- to C-terminus: Pyrimidine/purine nucleoside phosphorylase (95 aa).

This sequence belongs to the nucleoside phosphorylase PpnP family.

It carries out the reaction a purine D-ribonucleoside + phosphate = a purine nucleobase + alpha-D-ribose 1-phosphate. The enzyme catalyses adenosine + phosphate = alpha-D-ribose 1-phosphate + adenine. It catalyses the reaction cytidine + phosphate = cytosine + alpha-D-ribose 1-phosphate. The catalysed reaction is guanosine + phosphate = alpha-D-ribose 1-phosphate + guanine. It carries out the reaction inosine + phosphate = alpha-D-ribose 1-phosphate + hypoxanthine. The enzyme catalyses thymidine + phosphate = 2-deoxy-alpha-D-ribose 1-phosphate + thymine. It catalyses the reaction uridine + phosphate = alpha-D-ribose 1-phosphate + uracil. The catalysed reaction is xanthosine + phosphate = alpha-D-ribose 1-phosphate + xanthine. Catalyzes the phosphorolysis of diverse nucleosides, yielding D-ribose 1-phosphate and the respective free bases. Can use uridine, adenosine, guanosine, cytidine, thymidine, inosine and xanthosine as substrates. Also catalyzes the reverse reactions. The protein is Pyrimidine/purine nucleoside phosphorylase of Vibrio cholerae serotype O1 (strain ATCC 39315 / El Tor Inaba N16961).